The following is a 482-amino-acid chain: tRNA sulfurtransferase (482 aa).

Residues 61–165 (DQILAILMQT…YDHLHQVLHR (105 aa)) form the THUMP domain. ATP-binding positions include 183–184 (LI), K265, G287, and Q296. A disulfide bond links C344 and C456. The region spanning 404 to 482 (IGDGAIVLDI…GYGNIKVYRP (79 aa)) is the Rhodanese domain. The active-site Cysteine persulfide intermediate is C456.

It belongs to the ThiI family.

It localises to the cytoplasm. The enzyme catalyses [ThiI sulfur-carrier protein]-S-sulfanyl-L-cysteine + a uridine in tRNA + 2 reduced [2Fe-2S]-[ferredoxin] + ATP + H(+) = [ThiI sulfur-carrier protein]-L-cysteine + a 4-thiouridine in tRNA + 2 oxidized [2Fe-2S]-[ferredoxin] + AMP + diphosphate. It carries out the reaction [ThiS sulfur-carrier protein]-C-terminal Gly-Gly-AMP + S-sulfanyl-L-cysteinyl-[cysteine desulfurase] + AH2 = [ThiS sulfur-carrier protein]-C-terminal-Gly-aminoethanethioate + L-cysteinyl-[cysteine desulfurase] + A + AMP + 2 H(+). It participates in cofactor biosynthesis; thiamine diphosphate biosynthesis. Its function is as follows. Catalyzes the ATP-dependent transfer of a sulfur to tRNA to produce 4-thiouridine in position 8 of tRNAs, which functions as a near-UV photosensor. Also catalyzes the transfer of sulfur to the sulfur carrier protein ThiS, forming ThiS-thiocarboxylate. This is a step in the synthesis of thiazole, in the thiamine biosynthesis pathway. The sulfur is donated as persulfide by IscS. The chain is tRNA sulfurtransferase from Photobacterium profundum (strain SS9).